Reading from the N-terminus, the 83-residue chain is Hainantoxin-III 6 (83 aa).

The N-terminal stretch at 1-21 is a signal peptide; it reads MKASMFLALAGLVLLFVVGYA. Residues 22–48 constitute a propeptide that is removed on maturation; that stretch reads SESEEKESPRELLSKIFAVDDFKGEER. 3 disulfides stabilise this stretch: Cys-50–Cys-65, Cys-57–Cys-70, and Cys-64–Cys-77. Residue Leu-81 is modified to Leucine amide.

It belongs to the neurotoxin 10 (Hwtx-1) family. 15 (Hntx-3) subfamily. In terms of assembly, monomer. In terms of tissue distribution, expressed by the venom gland.

The protein resides in the secreted. In terms of biological role, selective antagonist of neuronal tetrodotoxin (TTX)-sensitive voltage-gated sodium channels (IC(50)=1270 nM on Nav1.1/SCN1A, 270 nM on Nav1.2/SCN2A, 491 nM on Nav1.3/SCN3A and 232 nM on Nav1.7/SCN9A). This toxin suppress Nav1.7 current amplitude without significantly altering the activation, inactivation, and repriming kinetics. Short extreme depolarizations partially activate the toxin-bound channel, indicating voltage-dependent inhibition of this toxin. This toxin increases the deactivation of the Nav1.7 current after extreme depolarizations. The toxin-Nav1.7 complex is gradually dissociated upon prolonged strong depolarizations in a voltage-dependent manner, and the unbound toxin rebinds to Nav1.7 after a long repolarization. Moreover, analysis of chimeric channels showed that the DIIS3-S4 linker is critical for toxin binding to Nav1.7. These data are consistent with this toxin interacting with Nav1.7 site 4 and trapping the domain II voltage sensor in the closed state. In Cyriopagopus hainanus (Chinese bird spider), this protein is Hainantoxin-III 6.